Consider the following 348-residue polypeptide: tRNA N6-adenosine threonylcarbamoyltransferase (348 aa).

Fe cation is bound by residues H116 and H120. Residues 138–142, D171, G184, and N282 each bind substrate; that span reads IISGG. D310 lines the Fe cation pocket.

The protein belongs to the KAE1 / TsaD family. Fe(2+) is required as a cofactor.

The protein localises to the cytoplasm. It carries out the reaction L-threonylcarbamoyladenylate + adenosine(37) in tRNA = N(6)-L-threonylcarbamoyladenosine(37) in tRNA + AMP + H(+). Its function is as follows. Required for the formation of a threonylcarbamoyl group on adenosine at position 37 (t(6)A37) in tRNAs that read codons beginning with adenine. Is involved in the transfer of the threonylcarbamoyl moiety of threonylcarbamoyl-AMP (TC-AMP) to the N6 group of A37, together with TsaE and TsaB. TsaD likely plays a direct catalytic role in this reaction. This is tRNA N6-adenosine threonylcarbamoyltransferase from Ehrlichia ruminantium (strain Gardel).